Consider the following 30-residue polypeptide: GIPCAESCVYIPCTITALLGCKCQDKVCYD.

Positions 1–30 (GIPCAESCVYIPCTITALLGCKCQDKVCYD) form a cross-link, cyclopeptide (Gly-Asp). Intrachain disulfides connect Cys-4–Cys-21, Cys-8–Cys-23, and Cys-13–Cys-28.

Post-translationally, this is a cyclic peptide.

Probably participates in a plant defense mechanism. This is Kalata-B16 from Oldenlandia affinis.